The chain runs to 225 residues: UPF0758 protein BCE_4545 (225 aa).

An MPN domain is found at Ser-103–Ile-225. Zn(2+) is bound by residues His-174, His-176, and Asp-187. The JAMM motif signature appears at His-174 to Asp-187.

Belongs to the UPF0758 family.

This chain is UPF0758 protein BCE_4545, found in Bacillus cereus (strain ATCC 10987 / NRS 248).